Here is a 117-residue protein sequence, read N- to C-terminus: Photosystem II reaction center Psb28 protein (117 aa).

The protein belongs to the Psb28 family. In terms of assembly, part of the photosystem II complex.

The protein localises to the cellular thylakoid membrane. This chain is Photosystem II reaction center Psb28 protein, found in Prochlorococcus marinus (strain MIT 9211).